The following is a 341-amino-acid chain: N-acetyl-gamma-glutamyl-phosphate reductase (341 aa).

Cysteine 147 is an active-site residue.

Belongs to the NAGSA dehydrogenase family. Type 1 subfamily.

It is found in the cytoplasm. The enzyme catalyses N-acetyl-L-glutamate 5-semialdehyde + phosphate + NADP(+) = N-acetyl-L-glutamyl 5-phosphate + NADPH + H(+). Its pathway is amino-acid biosynthesis; L-arginine biosynthesis; N(2)-acetyl-L-ornithine from L-glutamate: step 3/4. Catalyzes the NADPH-dependent reduction of N-acetyl-5-glutamyl phosphate to yield N-acetyl-L-glutamate 5-semialdehyde. The chain is N-acetyl-gamma-glutamyl-phosphate reductase from Dehalococcoides mccartyi (strain CBDB1).